A 205-amino-acid chain; its full sequence is Spermatogenesis-associated protein 24 (205 aa).

A coiled-coil region spans residues 17-166; sequence LALDQLRDVI…QQKQIFRNHM (150 aa). The segment at 138–185 is required for interaction with CBX5 and TBPL1; that stretch reads EDILNGKENEIKELQQVISQQKQIFRNHMSDFRIQKQQESYMAQVLDQ. Residues 180-205 form a disordered region; that stretch reads AQVLDQKHKKASGTRQARSHQHPREK. Residues 186-205 show a composition bias toward basic residues; that stretch reads KHKKASGTRQARSHQHPREK.

The protein belongs to the SPATA24 family. As to quaternary structure, homodimer. Interacts with CBX3, CBX5, GMNN, GTF2B, TBPL1 and the polycomb proteins PHCF2, RNF2 and SCMH1 but not with CBX1 or PCGF2.

The protein localises to the cytoplasm. Its subcellular location is the nucleus. It localises to the nucleolus. It is found in the nucleoplasm. Functionally, binds DNA with high affinity but does not bind to TATA boxes. Synergises with GMNN and TBP in activation of TATA box-containing promoters and with GMNN and TBPL1 in activation of the NF1 TATA-less promoter. May play a role in cytoplasm movement and removal during spermiogenesis. This is Spermatogenesis-associated protein 24 (SPATA24) from Homo sapiens (Human).